A 391-amino-acid chain; its full sequence is Phosphoglycerate kinase (391 aa).

Residues 21 to 23 (DLN), R36, 59 to 62 (HLGR), R113, and R146 contribute to the substrate site. Residues K197, E319, and 345-348 (GGDT) each bind ATP.

Belongs to the phosphoglycerate kinase family. Monomer.

It localises to the cytoplasm. It carries out the reaction (2R)-3-phosphoglycerate + ATP = (2R)-3-phospho-glyceroyl phosphate + ADP. It participates in carbohydrate degradation; glycolysis; pyruvate from D-glyceraldehyde 3-phosphate: step 2/5. The sequence is that of Phosphoglycerate kinase from Xanthomonas euvesicatoria pv. vesicatoria (strain 85-10) (Xanthomonas campestris pv. vesicatoria).